Reading from the N-terminus, the 180-residue chain is uncharacterized protein (180 aa).

The region spanning 45-180 (FVFSQVRTLD…GNRCAFWYAN (136 aa)) is the N-acetyltransferase domain.

This sequence belongs to the acetyltransferase family. Ycf52 subfamily.

This is an uncharacterized protein from Prochlorococcus marinus (strain SARG / CCMP1375 / SS120).